We begin with the raw amino-acid sequence, 104 residues long: Turripeptide OL55 (104 aa).

Contains 8 disulfide bonds. Expressed by the venom duct.

Its subcellular location is the secreted. Acts as a neurotoxin by inhibiting an ion channel. The polypeptide is Turripeptide OL55 (Iotyrris olangoensis (Sea snail)).